The following is a 1017-amino-acid chain: MEKLDRYLQEHFDVPAKNPSEEAQRRWRQAVGTIVKNRRRRFRWVPDLDRRSLDKAKVRSTQEKIRVALYVQQAALIFSDDELALITSKHDSKALKMHGGVDGISKKVRSSFDHGICASDLDTRQNIYGVNRYAEKPSRSFWMFVWDAFQDMTLIILMVCALLSVAVGLATEGWPKGMYDGLGIILSIFLVVMVTAVSDYKQSLQFKELDNEKKKIFIHVTRDGRRQKISIYDLVVGDIVHLSIGDQVPADGLYIHGYSLLIDESSLSGESDPVYVSQDKPFILAGTKVQDGSAKMIVTAVGMRTEWGKLMSTLSEGGEDETPLQVKLNGVATVIGKIGLVFAILTFLVLLVRFLIDKGMTVGLLKWYSTDALTIVNYFATAVTIIVVAVPEGLPLAVTLSLAFAMKKLMNDKALVRHLSACETMGSAGTICTDKTGTLTTNYMVVDKIWISEVSKSVTSNTISGELNSVVSSRTLSLLLQGIFENTSAEVVKEKDGKQTVLGTPTERAILEFGLGLEGVHDAEYSACTKVKVEPFNSVKKKMAVLISLPSGTSRWFCKGASEIILQMCDMMVDGDGNAIPLSEAQRKNILDTINSFASDALRTLCLAYKEVDDDIDDNADSPTSGFTLIAIFGIKDPVRPGVKDAVKTCMSAGITVRMVTGDNINTAKAIAKECGILTEDGVAIEGPEFHSKSPEEMRDLIPNIQVMARSLPLDKHTLVTNLRGMFDEVVSVTGDGTNDAPALHEADIGLAMGIAGTEVAKESADVIVLDDNFTTIINVARWGRAVYINIQKFVQFQLTVNIVALVINFVSACITGSAPLTAVQLLWVNMIMDTLGALALATEPPNDEMMKRPPVRKGESFITKVMWRNIMGQSLYQLFVLGALMFGGESLLNIKGADSKSIINTLIFNSFVFCQVFNEINSREMQKINVFRGIISNWIFIAVIAATVAFQVVIIEFLGTFASTVPLNWQHWLLSVGLGSISLIVGVILKCIPVGSGETSATPNGYRPLANGPDDI.

Topologically, residues 1–153 (MEKLDRYLQE…FVWDAFQDMT (153 aa)) are cytoplasmic. 2 helical membrane-spanning segments follow: residues 154–174 (LIIL…TEGW) and 177–197 (GMYD…VTAV). Residues 198–228 (SDYKQSLQFKELDNEKKKIFIHVTRDGRRQK) lie on the Cytoplasmic side of the membrane. 2 helical membrane-spanning segments follow: residues 229–249 (ISIY…DQVP) and 331–351 (VATV…LVLL). The Cytoplasmic segment spans residues 352-384 (VRFLIDKGMTVGLLKWYSTDALTIVNYFATAVT). The helical transmembrane segment at 385–405 (IIVVAVPEGLPLAVTLSLAFA) threads the bilayer. Asp-434 serves as the catalytic 4-aspartylphosphate intermediate. Residues Asp-736 and Asp-740 each contribute to the Mg(2+) site. A helical transmembrane segment spans residues 803–823 (IVALVINFVSACITGSAPLTA). Residues 824-825 (VQ) are Cytoplasmic-facing. Transmembrane regions (helical) follow at residues 826-846 (LLWV…TEPP) and 875-895 (SLYQ…LLNI). Residues 896–938 (KGADSKSIINTLIFNSFVFCQVFNEINSREMQKINVFRGIISN) are Cytoplasmic-facing. Helical transmembrane passes span 939-959 (WIFI…IEFL) and 973-993 (WLLS…LKCI). Residues 994-1017 (PVGSGETSATPNGYRPLANGPDDI) lie on the Cytoplasmic side of the membrane.

Belongs to the cation transport ATPase (P-type) (TC 3.A.3) family. Type IIB subfamily.

It localises to the membrane. It catalyses the reaction Ca(2+)(in) + ATP + H2O = Ca(2+)(out) + ADP + phosphate + H(+). Its activity is regulated as follows. Activated by calmodulin. This magnesium-dependent enzyme catalyzes the hydrolysis of ATP coupled with the translocation of calcium from the cytosol out of the cell, into the endoplasmic reticulum, or into organelles. The sequence is that of Probable calcium-transporting ATPase 8, plasma membrane-type from Oryza sativa subsp. japonica (Rice).